Reading from the N-terminus, the 145-residue chain is Probable low molecular weight protein-tyrosine-phosphatase EpsP (145 aa).

Cys9 functions as the Nucleophile in the catalytic mechanism. Residue Arg15 is part of the active site. Asp114 serves as the catalytic Proton donor.

This sequence belongs to the low molecular weight phosphotyrosine protein phosphatase family.

It carries out the reaction O-phospho-L-tyrosyl-[protein] + H2O = L-tyrosyl-[protein] + phosphate. It participates in glycan metabolism; exopolysaccharide biosynthesis. In terms of biological role, may be involved in assembly or function of the EPS I polymerization/export complex and/or the EpsB ATPase. Alternatively it may function in the removal of the terminal phosphate from C55-isoprenyl pyrophosphate in order to recycle the C55-isoprenyl phosphate lipid carrier used in the synthesis of polysaccharide repeat units. The chain is Probable low molecular weight protein-tyrosine-phosphatase EpsP (epsP) from Ralstonia solanacearum (Pseudomonas solanacearum).